A 97-amino-acid polypeptide reads, in one-letter code: Small ribosomal subunit protein bS6 (97 aa).

It belongs to the bacterial ribosomal protein bS6 family.

Its function is as follows. Binds together with bS18 to 16S ribosomal RNA. The polypeptide is Small ribosomal subunit protein bS6 (Syntrophomonas wolfei subsp. wolfei (strain DSM 2245B / Goettingen)).